A 93-amino-acid chain; its full sequence is Consomatin G2 (93 aa).

The N-terminal stretch at 1–18 is a signal peptide; sequence MQTAYWVMLMMMVCITAP. A propeptide spanning residues 19–69 is cleaved from the precursor; that stretch reads LPEGGKPNSGIRGLVPNDLTPQHTLRSLISRRQTDVLLDATLLTTPAPEQR. Cys-72 and Cys-77 form a disulfide bridge. Trp-74 carries the post-translational modification D-tryptophan. Residues 79–93 constitute a propeptide that is removed on maturation; that stretch reads WRPYPWRRRDLNGKR.

Belongs to the conotoxin C superfamily. Consomatin family. In terms of tissue distribution, expressed by the venom duct.

The protein localises to the secreted. Its function is as follows. Moderately activates human somatostatin receptors (SSTR) with a preferential activation of SSTR1 and SSTR4. In vivo, does not cause behavioral changes in mice within a few minutes of intracranial injection, but causes a progressive loss of movement thereafter. Four to five hours after injection, mice recover, even with the highest dose tested. Shows antinociception and antihyperalgesia activities in two mouse models of acute pain, most probably by acting outside the central nervous system. The polypeptide is Consomatin G2 (Conus geographus (Geography cone)).